The chain runs to 314 residues: Ribosomal protein L11 methyltransferase (314 aa).

The S-adenosyl-L-methionine site is built by threonine 166, glycine 187, aspartate 209, and asparagine 251.

This sequence belongs to the methyltransferase superfamily. PrmA family.

The protein localises to the cytoplasm. The enzyme catalyses L-lysyl-[protein] + 3 S-adenosyl-L-methionine = N(6),N(6),N(6)-trimethyl-L-lysyl-[protein] + 3 S-adenosyl-L-homocysteine + 3 H(+). In terms of biological role, methylates ribosomal protein L11. This chain is Ribosomal protein L11 methyltransferase, found in Clostridium tetani (strain Massachusetts / E88).